Reading from the N-terminus, the 38-residue chain is Photosystem II reaction center protein L (38 aa).

The chain crosses the membrane as a helical span at residues 17-37; that stretch reads SLYWGLLLIFVLAVLFSNYFF.

Belongs to the PsbL family. As to quaternary structure, PSII is composed of 1 copy each of membrane proteins PsbA, PsbB, PsbC, PsbD, PsbE, PsbF, PsbH, PsbI, PsbJ, PsbK, PsbL, PsbM, PsbT, PsbX, PsbY, PsbZ, Psb30/Ycf12, at least 3 peripheral proteins of the oxygen-evolving complex and a large number of cofactors. It forms dimeric complexes.

The protein resides in the plastid. Its subcellular location is the chloroplast thylakoid membrane. In terms of biological role, one of the components of the core complex of photosystem II (PSII). PSII is a light-driven water:plastoquinone oxidoreductase that uses light energy to abstract electrons from H(2)O, generating O(2) and a proton gradient subsequently used for ATP formation. It consists of a core antenna complex that captures photons, and an electron transfer chain that converts photonic excitation into a charge separation. This subunit is found at the monomer-monomer interface and is required for correct PSII assembly and/or dimerization. In Gnetum gnemon (Spanish joint-fir), this protein is Photosystem II reaction center protein L.